We begin with the raw amino-acid sequence, 133 residues long: Large ribosomal subunit protein uL22 (133 aa).

Belongs to the universal ribosomal protein uL22 family. In terms of assembly, part of the 50S ribosomal subunit.

In terms of biological role, this protein binds specifically to 23S rRNA; its binding is stimulated by other ribosomal proteins, e.g. L4, L17, and L20. It is important during the early stages of 50S assembly. It makes multiple contacts with different domains of the 23S rRNA in the assembled 50S subunit and ribosome. Its function is as follows. The globular domain of the protein is located near the polypeptide exit tunnel on the outside of the subunit, while an extended beta-hairpin is found that lines the wall of the exit tunnel in the center of the 70S ribosome. The protein is Large ribosomal subunit protein uL22 of Nocardia farcinica (strain IFM 10152).